Here is a 279-residue protein sequence, read N- to C-terminus: MYIVETKDLYFRYPDGTAVLKGINFKVKKGEMVSLLGPNGAGKSTLFLHFNGILRPTKGEVLIKGKPIKYDKKSLVEVRKTVGLVFQNPDDQIFAPTVKEDVAFGPLNLGLPKEEVEKRVKEALKAVGMEGFENKPPHHLSGGQKKRVAIAGILAMQPEVIVLDEPTAGLDPVGASKIMKLLYDLNKKGMTIIISTHDVDLVPVYADKVYVMYDGKILKEGTPKEVFSDVETIRKANLRLPRVAHLIEILNKKDNIPIEWGFTIGEVRRNIVNYLKEKC.

Residues 4–239 (VETKDLYFRY…VETIRKANLR (236 aa)) enclose the ABC transporter domain. 37–44 (GPNGAGKS) contacts ATP.

Belongs to the ABC transporter superfamily. Energy-coupling factor EcfA family. In terms of assembly, forms a stable energy-coupling factor (ECF) transporter complex composed of 2 membrane-embedded substrate-binding proteins (S component), 2 ATP-binding proteins (A component) and 2 transmembrane proteins (T component).

It localises to the cell membrane. ATP-binding (A) component of a common energy-coupling factor (ECF) ABC-transporter complex. Unlike classic ABC transporters this ECF transporter provides the energy necessary to transport a number of different substrates. The protein is Energy-coupling factor transporter ATP-binding protein EcfA of Methanocaldococcus jannaschii (strain ATCC 43067 / DSM 2661 / JAL-1 / JCM 10045 / NBRC 100440) (Methanococcus jannaschii).